Reading from the N-terminus, the 235-residue chain is Small ribosomal subunit protein uS3 (235 aa).

The KH type-2 domain occupies 39–107 (VRKFLNKELM…PAQINIAEVK (69 aa)).

Belongs to the universal ribosomal protein uS3 family. Part of the 30S ribosomal subunit. Forms a tight complex with proteins S10 and S14.

In terms of biological role, binds the lower part of the 30S subunit head. Binds mRNA in the 70S ribosome, positioning it for translation. The sequence is that of Small ribosomal subunit protein uS3 from Actinobacillus succinogenes (strain ATCC 55618 / DSM 22257 / CCUG 43843 / 130Z).